Consider the following 727-residue polypeptide: Sodium-dependent neutral amino acid transporter SLC6A17 (727 aa).

The Cytoplasmic segment spans residues 1 to 69 (MPKNSKVTQR…RPAWNSKLQY (69 aa)). Residues serine 13 and serine 20 each carry the phosphoserine modification. Residues 70 to 90 (ILAQIGFSVGLGNIWRFPYLC) traverse the membrane as a helical segment. Residues 91-95 (QKNGG) are Extracellular-facing. The helical transmembrane segment at 96-116 (GAYLVPYLVLLIIIGIPLFFL) threads the bilayer. Over 117 to 147 (ELAVGQRIRRGSIGVWHYICPRLGGIGFSSC) the chain is Cytoplasmic. Residues 148–168 (IVCLFVGLYYNVIIGWSIFYF) form a helical membrane-spanning segment. Residues 169–222 (FKSFQYPLPWSECPVVRNGSVAVVEAECEKSSATTYFWYREALDISDSISESGG) are Extracellular-facing. An N-linked (GlcNAc...) asparagine glycan is attached at asparagine 186. Residues 223–243 (LNWKMTLCLLVAWSIVGMAVV) traverse the membrane as a helical segment. Over 244-253 (KGIQSSGKVM) the chain is Cytoplasmic. The helical transmembrane segment at 254 to 274 (YFSSLFPYVVLACFLVRGLLL) threads the bilayer. Residues 275–300 (RGAVDGILHMFTPKLDKMLDPQVWRE) are Extracellular-facing. The chain crosses the membrane as a helical span at residues 301–321 (AATQVFFALGLGFGGVIAFSS). Topologically, residues 322–334 (YNKQDNNCHFDAA) are cytoplasmic. Residues 335–355 (LVSFINFFTSVLATLVVFAVL) traverse the membrane as a helical segment. At 356–460 (GFKANIMNEK…HFPASPFWSV (105 aa)) the chain is on the extracellular side. Residue tyrosine 377 is modified to Phosphotyrosine. Residue asparagine 393 is glycosylated (N-linked (GlcNAc...) asparagine). A helical transmembrane segment spans residues 461–481 (MFFLMLINLGLGSMIGTMAGI). Residues 482–490 (TTPIIDTFK) lie on the Cytoplasmic side of the membrane. The chain crosses the membrane as a helical span at residues 491–511 (VPKEMFTVGCCVFAFLVGLLF). Over 512–527 (VQRSGNYFVTMFDDYS) the chain is Extracellular. The helical transmembrane segment at 528–548 (ATLPLTLIVILENIAVAWIYG) threads the bilayer. Residues 549-573 (TKKFMQELTEMLGFRPYRFYFYMWK) are Cytoplasmic-facing. Residues 574–594 (FVSPLCMAVLTTASIIQLGVT) traverse the membrane as a helical segment. The Extracellular portion of the chain corresponds to 595–617 (PPGYSAWIKEEAAERYLYFPNWA). Residues 618–638 (MALLITLIVVATLPIPVVFVL) form a helical membrane-spanning segment. At 639–727 (RHFHLLSDGS…LLASTPESEL (89 aa)) the chain is on the cytoplasmic side. A phosphoserine mark is found at serine 665 and serine 701. The disordered stretch occupies residues 680–727 (VPSEAPSPMPTHRSYLGPGSTSPLETSGNPNGRYGSGYLLASTPESEL). The span at 698-709 (GSTSPLETSGNP) shows a compositional bias: polar residues.

This sequence belongs to the sodium:neurotransmitter symporter (SNF) (TC 2.A.22) family.

It is found in the cytoplasmic vesicle. Its subcellular location is the secretory vesicle. The protein resides in the synaptic vesicle membrane. The protein localises to the postsynapse. It localises to the presynapse. It carries out the reaction L-proline(in) + Na(+)(in) = L-proline(out) + Na(+)(out). It catalyses the reaction L-leucine(in) + Na(+)(in) = L-leucine(out) + Na(+)(out). The catalysed reaction is glycine(in) + Na(+)(in) = glycine(out) + Na(+)(out). The enzyme catalyses L-alanine(in) + Na(+)(in) = L-alanine(out) + Na(+)(out). It carries out the reaction L-glutamine(in) + Na(+)(in) = L-glutamine(out) + Na(+)(out). Synaptic vesicle transporter with apparent selectivity for neutral amino acids. The transport is sodium-coupled but chloride-independent, likely driven by the proton electrochemical gradient generated by vacuolar H(+)-ATPase in an overall electrogenic mechanism. May contribute to the synaptic uptake of neurotransmitter precursors in a process coupled in part to vesicle exocytosis. The chain is Sodium-dependent neutral amino acid transporter SLC6A17 from Homo sapiens (Human).